The primary structure comprises 427 residues: 3-phosphoshikimate 1-carboxyvinyltransferase (427 aa).

3-phosphoshikimate-binding residues include Lys22, Ser23, and Arg27. Lys22 contributes to the phosphoenolpyruvate binding site. Phosphoenolpyruvate is bound by residues Gly97 and Arg125. Positions 171, 172, 173, 199, 315, 338, and 342 each coordinate 3-phosphoshikimate. Gln173 provides a ligand contact to phosphoenolpyruvate. Catalysis depends on Asp315, which acts as the Proton acceptor. The phosphoenolpyruvate site is built by Arg346, Arg388, and Lys413.

This sequence belongs to the EPSP synthase family. As to quaternary structure, monomer.

It localises to the cytoplasm. It carries out the reaction 3-phosphoshikimate + phosphoenolpyruvate = 5-O-(1-carboxyvinyl)-3-phosphoshikimate + phosphate. It participates in metabolic intermediate biosynthesis; chorismate biosynthesis; chorismate from D-erythrose 4-phosphate and phosphoenolpyruvate: step 6/7. Its function is as follows. Catalyzes the transfer of the enolpyruvyl moiety of phosphoenolpyruvate (PEP) to the 5-hydroxyl of shikimate-3-phosphate (S3P) to produce enolpyruvyl shikimate-3-phosphate and inorganic phosphate. The polypeptide is 3-phosphoshikimate 1-carboxyvinyltransferase (Aliivibrio salmonicida (strain LFI1238) (Vibrio salmonicida (strain LFI1238))).